An 87-amino-acid polypeptide reads, in one-letter code: Beta-toxin CsE3 (87 aa).

Residues 1 to 19 (MNSLLIIAACLALIGTVWA) form the signal peptide. Residues 20–85 (KEGYIVNYHT…VWPLPKKKCN (66 aa)) enclose the LCN-type CS-alpha/beta domain. Intrachain disulfides connect cysteine 31–cysteine 84, cysteine 35–cysteine 60, cysteine 44–cysteine 65, and cysteine 48–cysteine 67. Asparagine 85 is subject to Asparagine amide.

It belongs to the long (4 C-C) scorpion toxin superfamily. Sodium channel inhibitor family. Beta subfamily. In terms of tissue distribution, expressed by the venom gland.

Its subcellular location is the secreted. Beta toxins bind voltage-independently at site-4 of sodium channels (Nav) and shift the voltage of activation toward more negative potentials thereby affecting sodium channel activation and promoting spontaneous and repetitive firing. This is Beta-toxin CsE3 from Centruroides sculpturatus (Arizona bark scorpion).